The sequence spans 85 residues: MEKLTVLILVATVLLTIQVLAQSDGDKHLMKRSKQYATKRLSALMRGHRQCIPQNVSCEEDDECCSNLECKCTSAPDCNFPKCRA.

The N-terminal stretch at methionine 1–serine 23 is a signal peptide. Positions aspartate 24 to arginine 49 are excised as a propeptide. Glutamine 50 is subject to Pyrrolidone carboxylic acid.

The protein belongs to the conotoxin O2 superfamily. Contains 4 disulfide bonds. Expressed by the venom duct.

The protein resides in the secreted. In Conus vexillum (Flag cone), this protein is Conotoxin Vx15a.